We begin with the raw amino-acid sequence, 308 residues long: Oxygen-dependent coproporphyrinogen-III oxidase (308 aa).

Ser97 contacts substrate. The a divalent metal cation site is built by His101 and His111. His111 acts as the Proton donor in catalysis. Substrate is bound at residue 113–115 (NVR). 2 residues coordinate a divalent metal cation: His153 and His183. The segment at 248–283 (YVEFNLVWDRGTHFGLQSGGRTESILMSMPPLASWS) is important for dimerization. 266–268 (GGR) provides a ligand contact to substrate.

It belongs to the aerobic coproporphyrinogen-III oxidase family. In terms of assembly, homodimer. A divalent metal cation is required as a cofactor.

Its subcellular location is the cytoplasm. It catalyses the reaction coproporphyrinogen III + O2 + 2 H(+) = protoporphyrinogen IX + 2 CO2 + 2 H2O. Its pathway is porphyrin-containing compound metabolism; protoporphyrin-IX biosynthesis; protoporphyrinogen-IX from coproporphyrinogen-III (O2 route): step 1/1. Functionally, involved in the heme biosynthesis. Catalyzes the aerobic oxidative decarboxylation of propionate groups of rings A and B of coproporphyrinogen-III to yield the vinyl groups in protoporphyrinogen-IX. The polypeptide is Oxygen-dependent coproporphyrinogen-III oxidase (Polaromonas sp. (strain JS666 / ATCC BAA-500)).